The primary structure comprises 498 residues: Pyridine nucleotide-disulfide oxidoreductase domain-containing protein 1 (498 aa).

The residue at position 1 (Met-1) is an N-acetylmethionine.

Belongs to the class-I pyridine nucleotide-disulfide oxidoreductase family. PYROXD1 subfamily. FAD serves as cofactor.

The protein resides in the nucleus. Its subcellular location is the cytoplasm. The protein localises to the myofibril. It is found in the sarcomere. In terms of biological role, probable FAD-dependent oxidoreductase; involved in the cellular oxidative stress response. Required for normal sarcomere structure and muscle fiber integrity. In Mus musculus (Mouse), this protein is Pyridine nucleotide-disulfide oxidoreductase domain-containing protein 1 (Pyroxd1).